The primary structure comprises 112 residues: uncharacterized protein (112 aa).

Helical transmembrane passes span 44-63 (VITG…LHSL) and 68-90 (LAAL…KLVH).

Its subcellular location is the cell membrane. This is an uncharacterized protein from Archaeoglobus fulgidus (strain ATCC 49558 / DSM 4304 / JCM 9628 / NBRC 100126 / VC-16).